We begin with the raw amino-acid sequence, 157 residues long: 2-C-methyl-D-erythritol 2,4-cyclodiphosphate synthase (157 aa).

A divalent metal cation-binding residues include Asp9 and His11. 4-CDP-2-C-methyl-D-erythritol 2-phosphate-binding positions include 9-11 and 35-36; these read DVH and HS. His43 serves as a coordination point for a divalent metal cation. 4-CDP-2-C-methyl-D-erythritol 2-phosphate-binding positions include 57–59, 62–66, 101–107, 133–136, Phe140, and Arg143; these read DIG, FPDTD, AEKPKMA, and TTTE.

This sequence belongs to the IspF family. As to quaternary structure, homotrimer. Requires a divalent metal cation as cofactor.

It carries out the reaction 4-CDP-2-C-methyl-D-erythritol 2-phosphate = 2-C-methyl-D-erythritol 2,4-cyclic diphosphate + CMP. Its pathway is isoprenoid biosynthesis; isopentenyl diphosphate biosynthesis via DXP pathway; isopentenyl diphosphate from 1-deoxy-D-xylulose 5-phosphate: step 4/6. In terms of biological role, involved in the biosynthesis of isopentenyl diphosphate (IPP) and dimethylallyl diphosphate (DMAPP), two major building blocks of isoprenoid compounds. Catalyzes the conversion of 4-diphosphocytidyl-2-C-methyl-D-erythritol 2-phosphate (CDP-ME2P) to 2-C-methyl-D-erythritol 2,4-cyclodiphosphate (ME-CPP) with a corresponding release of cytidine 5-monophosphate (CMP). This is 2-C-methyl-D-erythritol 2,4-cyclodiphosphate synthase from Listeria monocytogenes serotype 4a (strain HCC23).